Consider the following 206-residue polypeptide: Large ribosomal subunit protein uL4 (206 aa).

Residues 49-79 (KVKTRSEISRTTKKMYKQKGTGNARHGAASA) form a disordered region.

The protein belongs to the universal ribosomal protein uL4 family. In terms of assembly, part of the 50S ribosomal subunit.

Its function is as follows. One of the primary rRNA binding proteins, this protein initially binds near the 5'-end of the 23S rRNA. It is important during the early stages of 50S assembly. It makes multiple contacts with different domains of the 23S rRNA in the assembled 50S subunit and ribosome. Forms part of the polypeptide exit tunnel. This is Large ribosomal subunit protein uL4 from Methylobacterium sp. (strain 4-46).